The chain runs to 103 residues: Large ribosomal subunit protein bL21 (103 aa).

It belongs to the bacterial ribosomal protein bL21 family. As to quaternary structure, part of the 50S ribosomal subunit. Contacts protein L20.

Functionally, this protein binds to 23S rRNA in the presence of protein L20. The sequence is that of Large ribosomal subunit protein bL21 from Nitrosomonas europaea (strain ATCC 19718 / CIP 103999 / KCTC 2705 / NBRC 14298).